A 442-amino-acid chain; its full sequence is MFS transporter asaE (442 aa).

Residues 1 to 10 are compositionally biased toward polar residues; sequence MDRSRTSSQG. The interval 1–43 is disordered; the sequence is MDRSRTSSQGRDVLPPRGDEGRISPSLDKEKSPGPEDQPDAPP. Positions 17–34 are enriched in basic and acidic residues; the sequence is RGDEGRISPSLDKEKSPG. The next 12 membrane-spanning stretches (helical) occupy residues 47 to 67, 89 to 109, 119 to 139, 150 to 170, 177 to 197, 206 to 226, 252 to 272, 288 to 307, 319 to 339, 342 to 362, 381 to 401, and 413 to 433; these read LTAW…FGWV, TISW…PIVG, YLII…SIST, ICSA…VSAW, IAFA…PIMV, FGWS…IAIV, PVFI…FIPI, LASY…RLGA, IFIV…IPAT, APII…VSLS, LLFL…GAIL, and IFSG…RIVG.

This sequence belongs to the major facilitator superfamily. Monocarboxylate porter (TC 2.A.1.13) family.

The protein resides in the cell membrane. The protein operates within secondary metabolite biosynthesis. MFS transporter; part of the gene cluster that mediates the biosynthesis of aspergillic acid. Probably involved in aspergillic acid metabolism and transport. This is MFS transporter asaE from Aspergillus flavus (strain ATCC 200026 / FGSC A1120 / IAM 13836 / NRRL 3357 / JCM 12722 / SRRC 167).